The following is a 331-amino-acid chain: tRNA N6-adenosine threonylcarbamoyltransferase (331 aa).

Fe cation contacts are provided by histidine 109, histidine 113, and tyrosine 130. Substrate contacts are provided by residues 130-134, aspartate 162, aspartate 183, and serine 262; that span reads YLSGG. A Fe cation-binding site is contributed by aspartate 290.

This sequence belongs to the KAE1 / TsaD family. Requires Fe(2+) as cofactor.

It localises to the cytoplasm. It carries out the reaction L-threonylcarbamoyladenylate + adenosine(37) in tRNA = N(6)-L-threonylcarbamoyladenosine(37) in tRNA + AMP + H(+). In terms of biological role, required for the formation of a threonylcarbamoyl group on adenosine at position 37 (t(6)A37) in tRNAs that read codons beginning with adenine. Is probably involved in the transfer of the threonylcarbamoyl moiety of threonylcarbamoyl-AMP (TC-AMP) to the N6 group of A37. This is tRNA N6-adenosine threonylcarbamoyltransferase from Saccharolobus islandicus (strain Y.G.57.14 / Yellowstone #1) (Sulfolobus islandicus).